The chain runs to 460 residues: MTKSTWHQGELIEVAIADLSDTGDGVGRFAERVVFVPDTVPGDRVLVRLLHVKPNYAHGKLHQLLEPSPHRIRPGCIVADKCGGCQWQHIDYEYQLIAKRHQVIQALQRIGGFAQPPVDPVLVTASSLGYRNKATYPLDVSATGQVQAGYYQKGSHHVVNLNQCPVQDPRLNPLLAQVKQDIQQRDWPIYDEKRHQGQIRHLGLRIGRRTGEILLTLVVKDGNLPGIEQQAQEWLQRYPQLVGVSLNRNPERTNAIFGRETRCIAGVPYLREIFAGLEFQVRPDTFFQVFTETAEALLQVIESQLNLQGHETLIDAYCGIGTLTLPLSKQVRQAIGLELQPEAVQQAIVNAQHNGINNVEFQVGAVEKLLPKMGIIPDVVLLDPPRKGCDRIVIESLLASKPARIVYVSCKVATLARDLKLLCTDGTYTIQRIQSADFFPQTSHVEVAAFLVLSQSGKDN.

The 59-residue stretch at 5-63 (TWHQGELIEVAIADLSDTGDGVGRFAERVVFVPDTVPGDRVLVRLLHVKPNYAHGKLHQ) folds into the TRAM domain. Residues Cys76, Cys82, Cys85, and Cys164 each coordinate [4Fe-4S] cluster. S-adenosyl-L-methionine contacts are provided by Gln288, Tyr317, Glu338, and Asp383. The Nucleophile role is filled by Cys410.

This sequence belongs to the class I-like SAM-binding methyltransferase superfamily. RNA M5U methyltransferase family.

This is an uncharacterized protein from Nostoc sp. (strain PCC 7120 / SAG 25.82 / UTEX 2576).